Reading from the N-terminus, the 145-residue chain is D-aminoacyl-tRNA deacylase (145 aa).

The Gly-cisPro motif, important for rejection of L-amino acids signature appears at 137–138 (GP).

The protein belongs to the DTD family. As to quaternary structure, homodimer.

It is found in the cytoplasm. It catalyses the reaction glycyl-tRNA(Ala) + H2O = tRNA(Ala) + glycine + H(+). The enzyme catalyses a D-aminoacyl-tRNA + H2O = a tRNA + a D-alpha-amino acid + H(+). Its function is as follows. An aminoacyl-tRNA editing enzyme that deacylates mischarged D-aminoacyl-tRNAs. Also deacylates mischarged glycyl-tRNA(Ala), protecting cells against glycine mischarging by AlaRS. Acts via tRNA-based rather than protein-based catalysis; rejects L-amino acids rather than detecting D-amino acids in the active site. By recycling D-aminoacyl-tRNA to D-amino acids and free tRNA molecules, this enzyme counteracts the toxicity associated with the formation of D-aminoacyl-tRNA entities in vivo and helps enforce protein L-homochirality. This Pseudoalteromonas atlantica (strain T6c / ATCC BAA-1087) protein is D-aminoacyl-tRNA deacylase.